The sequence spans 391 residues: Tryptophan synthase beta chain (391 aa).

Lysine 86 carries the N6-(pyridoxal phosphate)lysine modification.

This sequence belongs to the TrpB family. Tetramer of two alpha and two beta chains. Pyridoxal 5'-phosphate is required as a cofactor.

The enzyme catalyses (1S,2R)-1-C-(indol-3-yl)glycerol 3-phosphate + L-serine = D-glyceraldehyde 3-phosphate + L-tryptophan + H2O. It functions in the pathway amino-acid biosynthesis; L-tryptophan biosynthesis; L-tryptophan from chorismate: step 5/5. The beta subunit is responsible for the synthesis of L-tryptophan from indole and L-serine. The polypeptide is Tryptophan synthase beta chain (Vibrio metschnikovii).